Consider the following 501-residue polypeptide: Probable pectate lyase 13 (501 aa).

The first 22 residues, 1-22, serve as a signal peptide directing secretion; the sequence is MLLQNFSNTIFLLCLFFTLLSA. Residues asparagine 27 and asparagine 49 are each glycosylated (N-linked (GlcNAc...) asparagine). Positions 55 to 78 are disordered; that stretch reads RQLSSPSSSSSSSSSSSSSSCRTG. Residues 58–74 are compositionally biased toward low complexity; that stretch reads SSPSSSSSSSSSSSSSS. Ca(2+) contacts are provided by aspartate 217, aspartate 241, and aspartate 245. The active site involves arginine 297. 2 disordered regions span residues 329–359 and 408–463; these read INSQ…DGEW and NAGV…SSGD. Residues 343–357 are compositionally biased toward basic and acidic residues; it reads SAKEVTKRVDSKDDG. A compositionally biased stretch (gly residues) spans 430–449; the sequence is GGDGGGGGSSGGSSGGGMDV. Over residues 450-463 the composition is skewed to low complexity; sequence MGGTTRGSSSSSGD. Serine 474 is lipidated: GPI-anchor amidated serine. The propeptide at 475–501 is removed in mature form; that stretch reads DAPSRPRLTLLFSLLMISVLSLSTLLL.

Belongs to the polysaccharide lyase 1 family. Ca(2+) serves as cofactor. As to expression, expressed equally in mature leaves, buds, flowers, rosettes and roots.

The protein resides in the cell membrane. The catalysed reaction is Eliminative cleavage of (1-&gt;4)-alpha-D-galacturonan to give oligosaccharides with 4-deoxy-alpha-D-galact-4-enuronosyl groups at their non-reducing ends.. The protein operates within glycan metabolism; pectin degradation; 2-dehydro-3-deoxy-D-gluconate from pectin: step 2/5. Susceptibility factor required for infection by most powdery mildews, but not by unrelated pathogens. Exact function not known, but clearly affects cell wall composition. This Arabidopsis thaliana (Mouse-ear cress) protein is Probable pectate lyase 13 (PMR6).